Reading from the N-terminus, the 198-residue chain is Recombination protein RecR (198 aa).

The C4-type zinc finger occupies 57–72 (CSVCGHITDRDPCYIC). Positions 80-175 (SVVCVVQEPK…KVTRIAHGLP (96 aa)) constitute a Toprim domain.

This sequence belongs to the RecR family.

In terms of biological role, may play a role in DNA repair. It seems to be involved in an RecBC-independent recombinational process of DNA repair. It may act with RecF and RecO. The sequence is that of Recombination protein RecR from Bacillus thuringiensis (strain Al Hakam).